The chain runs to 205 residues: Spermatogenesis-associated protein 24 (205 aa).

Residues 17 to 166 (LAFDQLRDVI…QQKQIFRNHM (150 aa)) are a coiled coil. Positions 138–185 (EDILNGKENEIKELQQVISQQKQIFRNHMSDFRIQKQQESYMAQVLDQ) are required for interaction with CBX5 and TBPL1. Residues 180-205 (AQVLDQKHKKASGTRQAHSHQHPREK) are disordered. Basic residues predominate over residues 186-205 (KHKKASGTRQAHSHQHPREK).

The protein belongs to the SPATA24 family. As to quaternary structure, homodimer. Interacts with CBX3, CBX5, GMNN, GTF2B, TBPL1 and the polycomb proteins PHCF2, RNF2 and SCMH1 but not with CBX1 or PCGF2.

Its subcellular location is the cytoplasm. It localises to the nucleus. The protein localises to the nucleolus. It is found in the nucleoplasm. Its function is as follows. Binds DNA with high affinity but does not bind to TATA boxes. Synergises with GMNN and TBP in activation of TATA box-containing promoters and with GMNN and TBPL1 in activation of the NF1 TATA-less promoter. May play a role in cytoplasm movement and removal during spermiogenesis. The protein is Spermatogenesis-associated protein 24 (SPATA24) of Macaca fascicularis (Crab-eating macaque).